The sequence spans 398 residues: NADH-ubiquinone oxidoreductase 49 kDa subunit (398 aa).

Belongs to the complex I 49 kDa subunit family.

The protein localises to the mitochondrion. The enzyme catalyses a ubiquinone + NADH + 5 H(+)(in) = a ubiquinol + NAD(+) + 4 H(+)(out). In terms of biological role, core subunit of the mitochondrial membrane respiratory chain NADH dehydrogenase (Complex I) that is believed to belong to the minimal assembly required for catalysis. Complex I functions in the transfer of electrons from NADH to the respiratory chain. The immediate electron acceptor for the enzyme is believed to be ubiquinone. Component of the iron-sulfur (IP) fragment of the enzyme. Component of the iron-sulfur (IP) fragment of the enzyme. The chain is NADH-ubiquinone oxidoreductase 49 kDa subunit (NAD7) from Cafeteria roenbergensis (Marine flagellate).